The sequence spans 77 residues: MSVEAKVKKIIAEKLQGVDIEDVIPEASLVDDLGADSLALVELIMSMEEAFDIDIDDDDAEKMITVNDAIEYIRKKS.

One can recognise a Carrier domain in the interval 1-77 (MSVEAKVKKI…DAIEYIRKKS (77 aa)). S37 carries the O-(pantetheine 4'-phosphoryl)serine modification.

Belongs to the acyl carrier protein (ACP) family. Post-translationally, 4'-phosphopantetheine is transferred from CoA to a specific serine of apo-ACP by AcpS. This modification is essential for activity because fatty acids are bound in thioester linkage to the sulfhydryl of the prosthetic group.

It is found in the cytoplasm. Its pathway is lipid metabolism; fatty acid biosynthesis. In terms of biological role, carrier of the growing fatty acid chain in fatty acid biosynthesis. The polypeptide is Acyl carrier protein (Desulforapulum autotrophicum (strain ATCC 43914 / DSM 3382 / VKM B-1955 / HRM2) (Desulfobacterium autotrophicum)).